The primary structure comprises 455 residues: Glycosyl hydrolase family 109 protein (455 aa).

The segment at residues 1 to 33 (MAGIDRRGFLKASMASVAAAALAGCASQQGTSA) is a signal peptide (tat-type signal). Residues 62 to 63 (ER), Asp-84, Gln-112, 133 to 136 (WALH), 153 to 154 (EV), and Asn-182 contribute to the NAD(+) site. Substrate-binding positions include Tyr-211, Arg-230, 242–245 (YPTH), and Tyr-324. Tyr-242 serves as a coordination point for NAD(+).

This sequence belongs to the Gfo/Idh/MocA family. Glycosyl hydrolase 109 subfamily. Requires NAD(+) as cofactor. In terms of processing, predicted to be exported by the Tat system. The position of the signal peptide cleavage has not been experimentally proven.

In terms of biological role, glycosidase. The chain is Glycosyl hydrolase family 109 protein from Shewanella amazonensis (strain ATCC BAA-1098 / SB2B).